A 504-amino-acid chain; its full sequence is Hydroxyisobutyraldehyde dehydrogenase (504 aa).

Glutamate 260 (proton acceptor) is an active-site residue. The active-site Nucleophile is the cysteine 294.

This sequence belongs to the aldehyde dehydrogenase family.

It is found in the cytoplasm. The catalysed reaction is 2-hydroxy-2-methylpropanal + NAD(+) + H2O = 2-hydroxy-2-methylpropanoate + NADH + 2 H(+). In terms of biological role, involved in the degradation of methyl tert-butyl ether (MTBE). Catalyzes the conversion of hydroxyisobutyraldehyde to hydroxyisobutyric acid (HIBA). This Mycolicibacterium austroafricanum (Mycobacterium austroafricanum) protein is Hydroxyisobutyraldehyde dehydrogenase.